Consider the following 421-residue polypeptide: C2H2 type master regulator of conidiophore development brlA (421 aa).

2 consecutive C2H2-type zinc fingers follow at residues 309 to 333 (FKCKEPGCKGRFKRQEHLKRHMKSH) and 339 to 364 (HVCWVPGCERAFSRSDNLNAHYTKTH). Positions 379 to 421 (ESSPDYDPDFRGQLTPDGLPIRGSTLDDPMPNSREYSVDGLDD) are disordered.

The protein resides in the nucleus. In terms of biological role, brlA, abaA and wetA are pivotal regulators of conidiophore development and conidium maturation. They act individually and together to regulate their own expression and that of numerous other sporulation-specific genes. Binds promoters of target genes at brlA response elements (BREs) containing the conserved sequence 5'-(C/A)(A/G)AGGG(G/A)-3'. Required for conidiophores formation. Controls expression of abaA. This is C2H2 type master regulator of conidiophore development brlA from Aspergillus oryzae (strain ATCC 42149 / RIB 40) (Yellow koji mold).